The primary structure comprises 921 residues: TRPM8 channel-associated factor 1 (921 aa).

In terms of domain architecture, Peptidase M60 spans 542-841 (YCWMSTGLYI…TYLQLQEAFG (300 aa)).

The protein belongs to the TCAF family. As to quaternary structure, interacts with TRPM8 (via N-terminus and C-terminus domains); the interaction inhibits TRPM8 channel activity. Interacts with TRPV6.

Its subcellular location is the cell membrane. In terms of biological role, positively regulates the plasma membrane cation channel TRPM8 activity. Involved in the recruitment of TRPM8 to the cell surface. Promotes prostate cancer cell migration inhibition in a TRPM8-dependent manner. The sequence is that of TRPM8 channel-associated factor 1 from Pongo abelii (Sumatran orangutan).